The chain runs to 158 residues: UPF0225 protein Pfl01_1218 (158 aa).

The protein belongs to the UPF0225 family.

This chain is UPF0225 protein Pfl01_1218, found in Pseudomonas fluorescens (strain Pf0-1).